Consider the following 314-residue polypeptide: Probable cell division protein WhiA (314 aa).

The H-T-H motif DNA-binding region spans 274 to 305 (SLAELGDRLEISKSGANHRMRKLKALEDMINA).

It belongs to the WhiA family.

Functionally, involved in cell division and chromosome segregation. The protein is Probable cell division protein WhiA of Leuconostoc citreum (strain KM20).